The sequence spans 239 residues: tRNA (guanine-N(7)-)-methyltransferase (239 aa).

Residues E68, E93, D120, and D143 each contribute to the S-adenosyl-L-methionine site. Residue D143 is part of the active site. Residues K147, D180, and 217–220 (TKFE) each bind substrate.

The protein belongs to the class I-like SAM-binding methyltransferase superfamily. TrmB family.

It catalyses the reaction guanosine(46) in tRNA + S-adenosyl-L-methionine = N(7)-methylguanosine(46) in tRNA + S-adenosyl-L-homocysteine. The protein operates within tRNA modification; N(7)-methylguanine-tRNA biosynthesis. Functionally, catalyzes the formation of N(7)-methylguanine at position 46 (m7G46) in tRNA. In Vibrio parahaemolyticus serotype O3:K6 (strain RIMD 2210633), this protein is tRNA (guanine-N(7)-)-methyltransferase.